We begin with the raw amino-acid sequence, 79 residues long: Acyl carrier protein (79 aa).

In terms of domain architecture, Carrier spans serine 2 to glutamine 77. Serine 37 carries the post-translational modification O-(pantetheine 4'-phosphoryl)serine.

Belongs to the acyl carrier protein (ACP) family. 4'-phosphopantetheine is transferred from CoA to a specific serine of apo-ACP by AcpS. This modification is essential for activity because fatty acids are bound in thioester linkage to the sulfhydryl of the prosthetic group.

It is found in the cytoplasm. It participates in lipid metabolism; fatty acid biosynthesis. Functionally, carrier of the growing fatty acid chain in fatty acid biosynthesis. The chain is Acyl carrier protein from Verminephrobacter eiseniae (strain EF01-2).